Reading from the N-terminus, the 125-residue chain is Small ribosomal subunit protein eS8 (125 aa).

The span at 1 to 11 (MAISQGKSTRL) shows a compositional bias: polar residues. Residues 1 to 38 (MAISQGKSTRLPSGARNVANRGKRKAELGRDPAETRVD) are disordered. The segment covering 25–38 (KAELGRDPAETRVD) has biased composition (basic and acidic residues).

Belongs to the eukaryotic ribosomal protein eS8 family. In terms of assembly, part of the 30S ribosomal subunit.

The protein is Small ribosomal subunit protein eS8 of Methanobrevibacter smithii (strain ATCC 35061 / DSM 861 / OCM 144 / PS).